The following is a 286-amino-acid chain: Shikimate dehydrogenase (NADP(+)) (286 aa).

Shikimate is bound by residues 22 to 24 and T71; that span reads SRS. Catalysis depends on K75, which acts as the Proton acceptor. E87 contacts NADP(+). The shikimate site is built by N96 and D111. NADP(+)-binding positions include 136-140, 160-165, and I225; these read GAGGA and NRTAAR. Y227 provides a ligand contact to shikimate. G248 is a binding site for NADP(+).

It belongs to the shikimate dehydrogenase family. Homodimer.

It catalyses the reaction shikimate + NADP(+) = 3-dehydroshikimate + NADPH + H(+). The protein operates within metabolic intermediate biosynthesis; chorismate biosynthesis; chorismate from D-erythrose 4-phosphate and phosphoenolpyruvate: step 4/7. Its function is as follows. Involved in the biosynthesis of the chorismate, which leads to the biosynthesis of aromatic amino acids. Catalyzes the reversible NADPH linked reduction of 3-dehydroshikimate (DHSA) to yield shikimate (SA). The protein is Shikimate dehydrogenase (NADP(+)) of Sinorhizobium fredii (strain NBRC 101917 / NGR234).